The following is a 448-amino-acid chain: Phosphoglucosamine mutase (448 aa).

The active-site Phosphoserine intermediate is the Ser-101. Mg(2+)-binding residues include Ser-101, Asp-242, Asp-244, and Asp-246. Residue Ser-101 is modified to Phosphoserine.

This sequence belongs to the phosphohexose mutase family. The cofactor is Mg(2+). Activated by phosphorylation.

It carries out the reaction alpha-D-glucosamine 1-phosphate = D-glucosamine 6-phosphate. Functionally, catalyzes the conversion of glucosamine-6-phosphate to glucosamine-1-phosphate. This is Phosphoglucosamine mutase from Afipia carboxidovorans (strain ATCC 49405 / DSM 1227 / KCTC 32145 / OM5) (Oligotropha carboxidovorans).